Reading from the N-terminus, the 185-residue chain is Ribosome maturation factor RimM (185 aa).

In terms of domain architecture, PRC barrel spans 92–168 (DDDTFYHADL…GRRVVVAEAF (77 aa)).

It belongs to the RimM family. As to quaternary structure, binds ribosomal protein uS19.

It localises to the cytoplasm. Its function is as follows. An accessory protein needed during the final step in the assembly of 30S ribosomal subunit, possibly for assembly of the head region. Essential for efficient processing of 16S rRNA. May be needed both before and after RbfA during the maturation of 16S rRNA. It has affinity for free ribosomal 30S subunits but not for 70S ribosomes. The polypeptide is Ribosome maturation factor RimM (Xanthobacter autotrophicus (strain ATCC BAA-1158 / Py2)).